The chain runs to 490 residues: Glycine--tRNA ligase (490 aa).

Positions 99 and 163 each coordinate substrate. ATP contacts are provided by residues 195-197 (RNE), 205-210 (FRTREF), 282-283 (EL), and 326-329 (GLTR). Residue 210–214 (FEQME) coordinates substrate. 322–326 (EPAAG) is a substrate binding site. A disordered region spans residues 470-490 (PVEMGGEPWPESGVQEAGGLY).

The protein belongs to the class-II aminoacyl-tRNA synthetase family. As to quaternary structure, homodimer.

The protein localises to the cytoplasm. The enzyme catalyses tRNA(Gly) + glycine + ATP = glycyl-tRNA(Gly) + AMP + diphosphate. Catalyzes the attachment of glycine to tRNA(Gly). The protein is Glycine--tRNA ligase of Bifidobacterium longum (strain NCC 2705).